Here is a 144-residue protein sequence, read N- to C-terminus: Nucleoside diphosphate kinase (144 aa).

ATP-binding residues include Lys11, Phe59, Arg87, Thr93, Arg104, and Asn114. Residue His117 is the Pros-phosphohistidine intermediate of the active site.

It belongs to the NDK family. As to quaternary structure, homotetramer. Mg(2+) is required as a cofactor.

The protein resides in the cytoplasm. It carries out the reaction a 2'-deoxyribonucleoside 5'-diphosphate + ATP = a 2'-deoxyribonucleoside 5'-triphosphate + ADP. The enzyme catalyses a ribonucleoside 5'-diphosphate + ATP = a ribonucleoside 5'-triphosphate + ADP. Functionally, major role in the synthesis of nucleoside triphosphates other than ATP. The ATP gamma phosphate is transferred to the NDP beta phosphate via a ping-pong mechanism, using a phosphorylated active-site intermediate. The polypeptide is Nucleoside diphosphate kinase (Baumannia cicadellinicola subsp. Homalodisca coagulata).